A 302-amino-acid polypeptide reads, in one-letter code: Pyridoxal kinase (302 aa).

Substrate-binding residues include Ser-10, Thr-45, and Tyr-122. ATP-binding positions include 181–182 and 215–227; these read TS and VGPK…TGTG. Residue Asp-228 participates in substrate binding.

Belongs to the pyridoxine kinase family. As to quaternary structure, homodimer. A divalent metal cation serves as cofactor.

The protein resides in the cytoplasm. The catalysed reaction is pyridoxal + ATP = pyridoxal 5'-phosphate + ADP + H(+). It functions in the pathway cofactor metabolism; pyridoxal 5'-phosphate salvage; pyridoxal 5'-phosphate from pyridoxal: step 1/1. Required for synthesis of pyridoxal-5-phosphate from vitamin B6. In Dictyostelium discoideum (Social amoeba), this protein is Pyridoxal kinase (pykA).